A 768-amino-acid chain; its full sequence is WD repeat-containing protein 20 homolog (768 aa).

The tract at residues 103–122 (ESPEAVAPTSSTYEHHKNEP) is disordered. WD repeat units lie at residues 224–264 (IEKT…ASSN), 302–342 (IGEG…LLAV), 345–384 (SYFG…VVCR), and 454–497 (CSLA…LNQG). The interval 531–608 (VSPGGAGVNA…VNSESSKKQN (78 aa)) is disordered. Residues 539-553 (NASSDSQSITNNHTT) are compositionally biased toward polar residues. Positions 570-582 (FSKFTSGSSSATS) are enriched in low complexity. Positions 595 to 608 (NGASVNSESSKKQN) are enriched in polar residues. A WD 5 repeat occupies 646-683 (VSHDRLTVLEFREDCVVTACQEGYICTWGRPGRYQPKR). A disordered region spans residues 684-749 (DCINSPGTAS…PNITSPSYRV (66 aa)). Positions 688 to 712 (SPGTASPESGQKPSGSTSAMTSSYG) are enriched in polar residues. The segment covering 724-733 (SRSSSTYSNS) has biased composition (low complexity). The span at 734–749 (EQQLRSPNITSPSYRV) shows a compositional bias: polar residues.

As to quaternary structure, interacts with usp-46; the interaction increases the catalytic activity of usp-46 in the presence of wdr-48. In terms of tissue distribution, expressed in several neurons in the head and tail.

Its function is as follows. Together with wdr-48, binds to and stimulates the activity of the deubiquitinating enzyme usp-46, leading to deubiquitination and stabilization of the glr-1 glutamate receptor. This Caenorhabditis elegans protein is WD repeat-containing protein 20 homolog.